We begin with the raw amino-acid sequence, 577 residues long: Outer spore wall assembly protein SHE10 (577 aa).

Positions 1 to 23 are cleaved as a signal peptide; that stretch reads MGKLIKLITTLTVLVSLLQYCCE. 2 coiled-coil regions span residues 379–416 and 513–561; these read NETR…ENVE and ILRS…EEDV. Over residues 525–545 the composition is skewed to basic and acidic residues; that stretch reads RERKERERKEREKAAAEEFQR. The segment at 525-577 is disordered; that stretch reads RERKERERKEREKAAAEEFQRQQELLLQQEEEDEEDVSYTSTSTITTTTTMTL. A compositionally biased stretch (low complexity) spans 562–577; the sequence is SYTSTSTITTTTTMTL.

It belongs to the SHE10 family. Component of the mitochondria-localized RNase mitochondrial RNA-processing (RNase MRP) composed of one single RNA encoded by the NME1 gene and at least 31 proteins. Absent in the nucleus-localized RNase MRP (NuMRP).

The protein resides in the mitochondrion. Its function is as follows. Involved in spore wall assembly. May be a component of the mitochondrial RNase MRP (MtMRP), a ribonucleoprotein endoribonuclease involved in the cleaving RNA transcripts to generate primers for DNA replication in mitochondria. This Saccharomyces cerevisiae (strain JAY291) (Baker's yeast) protein is Outer spore wall assembly protein SHE10.